The sequence spans 145 residues: Large ribosomal subunit protein uL14m (145 aa).

The transit peptide at 1–30 (MAALTGLWGSFAHVSRAFSQRCFSTSGSLS) directs the protein to the mitochondrion.

It belongs to the universal ribosomal protein uL14 family. Component of the mitochondrial ribosome large subunit (39S) which comprises a 16S rRNA and about 50 distinct proteins. Interacts with MALSU1.

It localises to the mitochondrion. Functionally, may form part of 2 intersubunit bridges in the assembled ribosome. Upon binding to MALSU1, intersubunit bridge formation is blocked, preventing ribosome formation and repressing translation. The polypeptide is Large ribosomal subunit protein uL14m (Mrpl14) (Mus musculus (Mouse)).